The chain runs to 89 residues: Small ribosomal subunit protein uS15 (89 aa).

Basic and acidic residues predominate over residues 1–21 (MAITQERKNQLISEFKTHESD). The segment at 1-23 (MAITQERKNQLISEFKTHESDTG) is disordered.

The protein belongs to the universal ribosomal protein uS15 family. As to quaternary structure, part of the 30S ribosomal subunit. Forms a bridge to the 50S subunit in the 70S ribosome, contacting the 23S rRNA.

In terms of biological role, one of the primary rRNA binding proteins, it binds directly to 16S rRNA where it helps nucleate assembly of the platform of the 30S subunit by binding and bridging several RNA helices of the 16S rRNA. Its function is as follows. Forms an intersubunit bridge (bridge B4) with the 23S rRNA of the 50S subunit in the ribosome. This Bacillus velezensis (strain DSM 23117 / BGSC 10A6 / LMG 26770 / FZB42) (Bacillus amyloliquefaciens subsp. plantarum) protein is Small ribosomal subunit protein uS15.